The following is a 233-amino-acid chain: MPYEPPTHTVERSLRATTGAKVIAGVDEVGRGAWAGPVTVCAAITGLRRPPEGLTDSKLLTVKRRTVLAEELRKWVTSYALGHASPEEIDALGMTAALRLAAVRALEALPVRPDAVILDGKHDYLGSPWKVRTVIKGDQSCVAVAAASVIAKVQRDKMMAELGIEHADFGFAANAGYPSPVHKAALAERGPTPYHRLSWAYLDALPQWRHLKKVRSWADGSVPEIEGQLGFDF.

Positions 21–211 (KVIAGVDEVG…LDALPQWRHL (191 aa)) constitute an RNase H type-2 domain. Residues aspartate 27, glutamate 28, and aspartate 119 each contribute to the a divalent metal cation site.

It belongs to the RNase HII family. It depends on Mn(2+) as a cofactor. The cofactor is Mg(2+).

The protein resides in the cytoplasm. It carries out the reaction Endonucleolytic cleavage to 5'-phosphomonoester.. In terms of biological role, endonuclease that specifically degrades the RNA of RNA-DNA hybrids. The protein is Ribonuclease HII of Streptomyces avermitilis (strain ATCC 31267 / DSM 46492 / JCM 5070 / NBRC 14893 / NCIMB 12804 / NRRL 8165 / MA-4680).